Here is a 718-residue protein sequence, read N- to C-terminus: Polyribonucleotide nucleotidyltransferase (718 aa).

The Mg(2+) site is built by D487 and D493. Residues 554–613 (PRIETFKIPTDKIREVIGTGGKVIREIVEKTGAKVNIEDDGTVKVASSDGESIKAAIKWI) form the KH domain. The S1 motif domain maps to 623 to 691 (GEIYEGTVVK…DRGKTRLSMK (69 aa)). The disordered stretch occupies residues 692–718 (VVDQETGEDLEAKQKAEGDAPREAAGE). The span at 701 to 718 (LEAKQKAEGDAPREAAGE) shows a compositional bias: basic and acidic residues.

This sequence belongs to the polyribonucleotide nucleotidyltransferase family. It depends on Mg(2+) as a cofactor.

Its subcellular location is the cytoplasm. The catalysed reaction is RNA(n+1) + phosphate = RNA(n) + a ribonucleoside 5'-diphosphate. Functionally, involved in mRNA degradation. Catalyzes the phosphorolysis of single-stranded polyribonucleotides processively in the 3'- to 5'-direction. The sequence is that of Polyribonucleotide nucleotidyltransferase from Nitrobacter winogradskyi (strain ATCC 25391 / DSM 10237 / CIP 104748 / NCIMB 11846 / Nb-255).